The sequence spans 407 residues: Multifunctional CCA protein (407 aa).

ATP contacts are provided by Gly8 and Arg11. Residues Gly8 and Arg11 each contribute to the CTP site. 2 residues coordinate Mg(2+): Asp21 and Asp23. 3 residues coordinate ATP: Arg91, Arg137, and Arg140. The CTP site is built by Arg91, Arg137, and Arg140. Positions 228-329 (TGVHALMALA…VALFDRVDAW (102 aa)) constitute an HD domain.

The protein belongs to the tRNA nucleotidyltransferase/poly(A) polymerase family. Bacterial CCA-adding enzyme type 1 subfamily. Monomer. Can also form homodimers and oligomers. Mg(2+) is required as a cofactor. It depends on Ni(2+) as a cofactor.

The catalysed reaction is a tRNA precursor + 2 CTP + ATP = a tRNA with a 3' CCA end + 3 diphosphate. It catalyses the reaction a tRNA with a 3' CCA end + 2 CTP + ATP = a tRNA with a 3' CCACCA end + 3 diphosphate. Catalyzes the addition and repair of the essential 3'-terminal CCA sequence in tRNAs without using a nucleic acid template. Adds these three nucleotides in the order of C, C, and A to the tRNA nucleotide-73, using CTP and ATP as substrates and producing inorganic pyrophosphate. tRNA 3'-terminal CCA addition is required both for tRNA processing and repair. Also involved in tRNA surveillance by mediating tandem CCA addition to generate a CCACCA at the 3' terminus of unstable tRNAs. While stable tRNAs receive only 3'-terminal CCA, unstable tRNAs are marked with CCACCA and rapidly degraded. The polypeptide is Multifunctional CCA protein (Erwinia tasmaniensis (strain DSM 17950 / CFBP 7177 / CIP 109463 / NCPPB 4357 / Et1/99)).